A 399-amino-acid polypeptide reads, in one-letter code: MLRWLTAGESHGPALMGIIEGVPAGVEITSGHIADSLARRRLGYGRGARMKFEQDVVTILGGVRHGVTQGGPVAVQVGNTEWPKWEQIMAPDPVDPELLADQARNAPLTRPRPGHADFTGMQKYGFDEARPVLERASARETATRVAMGTVAAQFLKHLGIELVSHTVSIASVSVPDGRPLPEPADVIALDADPLRCFDRETSDAMVAEVDAAHKEGETLGGVVEVLAYGLPPGLGSYVHWDRRLDSRLAAALMGIQAIKGVEVGDGFRTAARRGSAAHDEIVRDEDGRIVRASNRAGGIEGGMSIGDVLRVRAAMKPIATVPRALKTIDVSTGEPAKAHHQRSDVCAVPAAGVVAEAMVALVLAEAVTEKFGGDSVAETARNIKGYLDNIPASLDSIGQ.

NADP(+)-binding residues include Arg-40 and Arg-46. FMN contacts are provided by residues 135–137, 256–257, Gly-301, 316–320, and Arg-342; these read RAS, QA, and KPIAT.

Belongs to the chorismate synthase family. Homotetramer. FMNH2 is required as a cofactor.

It catalyses the reaction 5-O-(1-carboxyvinyl)-3-phosphoshikimate = chorismate + phosphate. It participates in metabolic intermediate biosynthesis; chorismate biosynthesis; chorismate from D-erythrose 4-phosphate and phosphoenolpyruvate: step 7/7. Catalyzes the anti-1,4-elimination of the C-3 phosphate and the C-6 proR hydrogen from 5-enolpyruvylshikimate-3-phosphate (EPSP) to yield chorismate, which is the branch point compound that serves as the starting substrate for the three terminal pathways of aromatic amino acid biosynthesis. This reaction introduces a second double bond into the aromatic ring system. The protein is Chorismate synthase of Pseudarthrobacter chlorophenolicus (strain ATCC 700700 / DSM 12829 / CIP 107037 / JCM 12360 / KCTC 9906 / NCIMB 13794 / A6) (Arthrobacter chlorophenolicus).